Consider the following 828-residue polypeptide: Periplasmic nitrate reductase (828 aa).

A signal peptide (tat-type signal) is located at residues 1–31 (MKLSRRSFMKANAVAAAAAAAGLSVPGVARA). The 4Fe-4S Mo/W bis-MGD-type domain occupies 39-95 (IKWDKAPCRFCGTGCGVLVGTQQGRVVACQGDPDAPVNRGLNCIKGYFLPKIMYGKD). 4 residues coordinate [4Fe-4S] cluster: Cys-46, Cys-49, Cys-53, and Cys-81. Mo-bis(molybdopterin guanine dinucleotide) contacts are provided by residues Lys-83, Gln-150, Asn-175, Cys-179, 212-219 (WGANMAEM), 243-247 (STYQH), 262-264 (QSD), Met-372, Gln-376, Asn-482, 508-509 (SD), Lys-531, Asp-558, and 718-727 (TGRVLEHWHT). Position 794 (Phe-794) interacts with substrate. Asn-802 and Lys-819 together coordinate Mo-bis(molybdopterin guanine dinucleotide).

It belongs to the prokaryotic molybdopterin-containing oxidoreductase family. NasA/NapA/NarB subfamily. Component of the periplasmic nitrate reductase NapAB complex composed of NapA and NapB. It depends on [4Fe-4S] cluster as a cofactor. The cofactor is Mo-bis(molybdopterin guanine dinucleotide). In terms of processing, predicted to be exported by the Tat system. The position of the signal peptide cleavage has not been experimentally proven.

It is found in the periplasm. The catalysed reaction is 2 Fe(II)-[cytochrome] + nitrate + 2 H(+) = 2 Fe(III)-[cytochrome] + nitrite + H2O. Functionally, catalytic subunit of the periplasmic nitrate reductase complex NapAB. Receives electrons from NapB and catalyzes the reduction of nitrate to nitrite. The protein is Periplasmic nitrate reductase of Shigella boydii serotype 18 (strain CDC 3083-94 / BS512).